The primary structure comprises 224 residues: UPF0758 protein Maqu_3564 (224 aa).

Residues 102–224 (PLRSPADTRR…VISLAERGLM (123 aa)) form the MPN domain. Positions 173, 175, and 186 each coordinate Zn(2+). A JAMM motif motif is present at residues 173–186 (HNHPSGVAEPSQAD).

It belongs to the UPF0758 family.

This is UPF0758 protein Maqu_3564 from Marinobacter nauticus (strain ATCC 700491 / DSM 11845 / VT8) (Marinobacter aquaeolei).